A 146-amino-acid chain; its full sequence is Large ribosomal subunit protein bL19 (146 aa).

This sequence belongs to the bacterial ribosomal protein bL19 family.

In terms of biological role, this protein is located at the 30S-50S ribosomal subunit interface and may play a role in the structure and function of the aminoacyl-tRNA binding site. This is Large ribosomal subunit protein bL19 from Bartonella henselae (strain ATCC 49882 / DSM 28221 / CCUG 30454 / Houston 1) (Rochalimaea henselae).